Consider the following 258-residue polypeptide: Indole-3-glycerol phosphate synthase (258 aa).

This sequence belongs to the TrpC family.

It catalyses the reaction 1-(2-carboxyphenylamino)-1-deoxy-D-ribulose 5-phosphate + H(+) = (1S,2R)-1-C-(indol-3-yl)glycerol 3-phosphate + CO2 + H2O. The protein operates within amino-acid biosynthesis; L-tryptophan biosynthesis; L-tryptophan from chorismate: step 4/5. The protein is Indole-3-glycerol phosphate synthase of Legionella pneumophila (strain Lens).